We begin with the raw amino-acid sequence, 393 residues long: Elongation factor Tu (393 aa).

The tr-type G domain occupies 10–203 (KPHVNIGTIG…AVDEFIPEPV (194 aa)). A G1 region spans residues 19–26 (GHVDHGKT). A GTP-binding site is contributed by 19 to 26 (GHVDHGKT). Thr-26 serves as a coordination point for Mg(2+). The G2 stretch occupies residues 60-64 (GITIS). The G3 stretch occupies residues 81–84 (DCPG). Residues 81–85 (DCPGH) and 136–139 (NKVD) contribute to the GTP site. A G4 region spans residues 136–139 (NKVD). The tract at residues 173–175 (SAL) is G5.

Belongs to the TRAFAC class translation factor GTPase superfamily. Classic translation factor GTPase family. EF-Tu/EF-1A subfamily. Monomer.

It localises to the cytoplasm. It carries out the reaction GTP + H2O = GDP + phosphate + H(+). In terms of biological role, GTP hydrolase that promotes the GTP-dependent binding of aminoacyl-tRNA to the A-site of ribosomes during protein biosynthesis. The sequence is that of Elongation factor Tu from Chlorobium limicola (strain DSM 245 / NBRC 103803 / 6330).